Here is a 248-residue protein sequence, read N- to C-terminus: tRNA (guanine-N(1)-)-methyltransferase (248 aa).

S-adenosyl-L-methionine is bound by residues Gly113 and 133-138 (IGDYVL).

It belongs to the RNA methyltransferase TrmD family. Homodimer.

It is found in the cytoplasm. It carries out the reaction guanosine(37) in tRNA + S-adenosyl-L-methionine = N(1)-methylguanosine(37) in tRNA + S-adenosyl-L-homocysteine + H(+). Functionally, specifically methylates guanosine-37 in various tRNAs. This Shewanella loihica (strain ATCC BAA-1088 / PV-4) protein is tRNA (guanine-N(1)-)-methyltransferase.